The following is a 341-amino-acid chain: Dehydration-responsive element-binding protein 2C (341 aa).

The Nuclear localization signal signature appears at 8 to 48 (RKRKSRGTRDVAEILRQWREYNEQIEAESCIDGGGPKSIRK). The segment at 36 to 63 (SCIDGGGPKSIRKPPPKGSRKGCMKGKG) is disordered. The segment covering 45–59 (SIRKPPPKGSRKGCM) has biased composition (basic residues). The AP2/ERF DNA-binding region spans 71–128 (DYRGVRQRRWGKWVAEIREPDGGARLWLGTFSSSYEAALAYDEAAKAIYGQSARLNLP).

This sequence belongs to the AP2/ERF transcription factor family. ERF subfamily.

Its subcellular location is the nucleus. Its function is as follows. Transcriptional activator that binds specifically to the DNA sequence 5'-[AG]CCGAC-3'. Binding to the C-repeat/DRE element mediates high salinity- and abscisic acid-inducible transcription. This chain is Dehydration-responsive element-binding protein 2C (DREB2C), found in Arabidopsis thaliana (Mouse-ear cress).